Reading from the N-terminus, the 658-residue chain is Exoribonuclease 2 (658 aa).

One can recognise an RNB domain in the interval 189-531; the sequence is REDLTALHFI…NHRLIKAVLT (343 aa). Residues 576 to 658 form the S1 motif domain; it reads KPTFQAEIQD…ETRSIVGTLC (83 aa).

The protein belongs to the RNR ribonuclease family. RNase II subfamily.

It is found in the cytoplasm. It catalyses the reaction Exonucleolytic cleavage in the 3'- to 5'-direction to yield nucleoside 5'-phosphates.. Functionally, involved in mRNA degradation. Hydrolyzes single-stranded polyribonucleotides processively in the 3' to 5' direction. The sequence is that of Exoribonuclease 2 from Pasteurella multocida (strain Pm70).